The following is a 704-amino-acid chain: Low calcium response locus protein D (704 aa).

7 helical membrane passes run 18 to 35 (IMLA…VLPL), 42 to 61 (ILIA…AIYI), 108 to 132 (FVVG…FLVI), 200 to 220 (AIAG…IGVT), 235 to 259 (ILTV…GIIV), 278 to 297 (VVAQ…LFGL), and 304 to 320 (VTFL…GYML).

This sequence belongs to the FHIPEP (flagella/HR/invasion proteins export pore) family.

The protein resides in the cell inner membrane. Functionally, could be involved in the secretion of the yop virulence proteins. This is Low calcium response locus protein D (lcrD) from Yersinia pestis.